A 338-amino-acid chain; its full sequence is Nuclear hormone receptor family member nhr-108 (338 aa).

The segment at residues 7-82 (NQPCMVCGEI…IGMLEKVVAS (76 aa)) is a DNA-binding region (nuclear receptor). Residues 10–30 (CMVCGEISYSIRFGAVSCRAC) form an NR C4-type zinc finger. An NR C4-type; degenerate zinc finger spans residues 46 to 65 (KRCNGACDLGKYHRKTCQSC). The NR LBD domain occupies 92–338 (NNQTILSGLE…QCPLYEATNE (247 aa)).

Belongs to the nuclear hormone receptor family.

It is found in the nucleus. Orphan nuclear receptor. This Caenorhabditis elegans protein is Nuclear hormone receptor family member nhr-108 (nhr-108).